An 847-amino-acid polypeptide reads, in one-letter code: Alanine--tRNA ligase (847 aa).

Residues H554, H558, C656, and H660 each coordinate Zn(2+).

Belongs to the class-II aminoacyl-tRNA synthetase family. Zn(2+) serves as cofactor.

The protein localises to the cytoplasm. The enzyme catalyses tRNA(Ala) + L-alanine + ATP = L-alanyl-tRNA(Ala) + AMP + diphosphate. Its function is as follows. Catalyzes the attachment of alanine to tRNA(Ala) in a two-step reaction: alanine is first activated by ATP to form Ala-AMP and then transferred to the acceptor end of tRNA(Ala). Also edits incorrectly charged Ser-tRNA(Ala) and Gly-tRNA(Ala) via its editing domain. In Helicobacter pylori (strain ATCC 700392 / 26695) (Campylobacter pylori), this protein is Alanine--tRNA ligase.